The sequence spans 357 residues: 4-hydroxy-3-methylbut-2-en-1-yl diphosphate synthase (flavodoxin) (357 aa).

The [4Fe-4S] cluster site is built by Cys-264, Cys-267, Cys-299, and Glu-306.

Belongs to the IspG family. Requires [4Fe-4S] cluster as cofactor.

The enzyme catalyses (2E)-4-hydroxy-3-methylbut-2-enyl diphosphate + oxidized [flavodoxin] + H2O + 2 H(+) = 2-C-methyl-D-erythritol 2,4-cyclic diphosphate + reduced [flavodoxin]. Its pathway is isoprenoid biosynthesis; isopentenyl diphosphate biosynthesis via DXP pathway; isopentenyl diphosphate from 1-deoxy-D-xylulose 5-phosphate: step 5/6. Converts 2C-methyl-D-erythritol 2,4-cyclodiphosphate (ME-2,4cPP) into 1-hydroxy-2-methyl-2-(E)-butenyl 4-diphosphate. This chain is 4-hydroxy-3-methylbut-2-en-1-yl diphosphate synthase (flavodoxin), found in Campylobacter jejuni subsp. jejuni serotype O:6 (strain 81116 / NCTC 11828).